Here is a 281-residue protein sequence, read N- to C-terminus: Energy-coupling factor transporter ATP-binding protein EcfA1 (281 aa).

Residues 6–242 form the ABC transporter domain; sequence IDVKHLDYRY…GEALIKMGLD (237 aa). ATP is bound at residue 42–49; that stretch reads GHNGSGKS.

Belongs to the ABC transporter superfamily. Energy-coupling factor EcfA family. In terms of assembly, forms a stable energy-coupling factor (ECF) transporter complex composed of 2 membrane-embedded substrate-binding proteins (S component), 2 ATP-binding proteins (A component) and 2 transmembrane proteins (T component).

Its subcellular location is the cell membrane. ATP-binding (A) component of a common energy-coupling factor (ECF) ABC-transporter complex. Unlike classic ABC transporters this ECF transporter provides the energy necessary to transport a number of different substrates. The protein is Energy-coupling factor transporter ATP-binding protein EcfA1 of Lactiplantibacillus plantarum (strain ATCC BAA-793 / NCIMB 8826 / WCFS1) (Lactobacillus plantarum).